The primary structure comprises 91 residues: ATP synthase subunit c (91 aa).

Transmembrane regions (helical) follow at residues 4-24 (FTMC…GTGI) and 53-73 (IGLA…LIIL).

It belongs to the ATPase C chain family. F-type ATPases have 2 components, F(1) - the catalytic core - and F(0) - the membrane proton channel. F(1) has five subunits: alpha(3), beta(3), gamma(1), delta(1), epsilon(1). F(0) has three main subunits: a(1), b(2) and c(10-14). The alpha and beta chains form an alternating ring which encloses part of the gamma chain. F(1) is attached to F(0) by a central stalk formed by the gamma and epsilon chains, while a peripheral stalk is formed by the delta and b chains.

Its subcellular location is the cell inner membrane. Its function is as follows. F(1)F(0) ATP synthase produces ATP from ADP in the presence of a proton or sodium gradient. F-type ATPases consist of two structural domains, F(1) containing the extramembraneous catalytic core and F(0) containing the membrane proton channel, linked together by a central stalk and a peripheral stalk. During catalysis, ATP synthesis in the catalytic domain of F(1) is coupled via a rotary mechanism of the central stalk subunits to proton translocation. In terms of biological role, key component of the F(0) channel; it plays a direct role in translocation across the membrane. A homomeric c-ring of between 10-14 subunits forms the central stalk rotor element with the F(1) delta and epsilon subunits. The protein is ATP synthase subunit c of Citrifermentans bemidjiense (strain ATCC BAA-1014 / DSM 16622 / JCM 12645 / Bem) (Geobacter bemidjiensis).